Reading from the N-terminus, the 872-residue chain is TATA box-binding protein-associated factor RNA polymerase I subunit B (872 aa).

The segment at 6-40 (ETMQLENMHCDVCEGTTFQEREGFYYCVECGTQKD) adopts an RRN7-type zinc-finger fold. Zn(2+) contacts are provided by C15, C18, C32, and C35. The B-reader stretch occupies residues 41-72 (QIRAVDITAEDNFDDTAAGRYTARTIRQKKDT). The tract at residues 73–84 (EKEDEDDITSWE) is B-linker. The N-terminal cyclin fold stretch occupies residues 85 to 312 (FYNYVLRGFL…LPGNVAAKGK (228 aa)). A disordered region spans residues 187 to 206 (DASGYRSHGGASESEGEQSL).

This sequence belongs to the RRN7/TAF1B family.

Its subcellular location is the nucleus. It localises to the nucleolus. Functionally, component of RNA polymerase I core factor complex that acts as a GTF2B/TFIIB-like factor and plays a key role in multiple steps during transcription initiation such as pre-initiation complex (PIC) assembly and postpolymerase recruitment events in polymerase I (Pol I) transcription. Binds rDNA promoters and plays a role in Pol I recruitment. This is TATA box-binding protein-associated factor RNA polymerase I subunit B from Drosophila melanogaster (Fruit fly).